A 104-amino-acid chain; its full sequence is Gastrin (104 aa).

Positions M1–A21 are cleaved as a signal peptide. The interval S22 to R49 is disordered. Residues S22–W58 constitute a propeptide that is removed on maturation. A pyrrolidone carboxylic acid mark is found at Q59 and Q76. Y87 is subject to Sulfotyrosine. F92 bears the Phenylalanine amide mark. S96 is subject to Phosphoserine. Positions S96–P104 are excised as a propeptide.

The protein belongs to the gastrin/cholecystokinin family.

The protein resides in the secreted. Gastrin stimulates the stomach mucosa to produce and secrete hydrochloric acid and the pancreas to secrete its digestive enzymes. It also stimulates smooth muscle contraction and increases blood circulation and water secretion in the stomach and intestine. This chain is Gastrin (GAST), found in Felis catus (Cat).